Consider the following 348-residue polypeptide: Probable protein phosphatase 2C 35 (348 aa).

A compositionally biased stretch (low complexity) spans 11 to 24 (RYPSSSSDGDSRGP). The tract at residues 11 to 40 (RYPSSSSDGDSRGPLEANGVLKGKDQKPLG) is disordered. Residues 52 to 342 (VYSVLSQRGY…DDITIIIVQI (291 aa)) form the PPM-type phosphatase domain. Mn(2+) contacts are provided by Asp-93, Gly-94, Asp-289, and Asp-333.

The protein belongs to the PP2C family. Mg(2+) is required as a cofactor. Mn(2+) serves as cofactor.

It catalyses the reaction O-phospho-L-seryl-[protein] + H2O = L-seryl-[protein] + phosphate. The catalysed reaction is O-phospho-L-threonyl-[protein] + H2O = L-threonyl-[protein] + phosphate. This chain is Probable protein phosphatase 2C 35, found in Arabidopsis thaliana (Mouse-ear cress).